We begin with the raw amino-acid sequence, 90 residues long: MARITVEDCLDYVDNRFELVIVGSKRARQIATQGKEPLVAPENDKPTVIALREIELGLIDDAFLAATDAEPVEHFAEPSEENADNLYPEA.

This sequence belongs to the RNA polymerase subunit omega family. The RNAP catalytic core consists of 2 alpha, 1 beta, 1 beta' and 1 omega subunit. When a sigma factor is associated with the core the holoenzyme is formed, which can initiate transcription.

It catalyses the reaction RNA(n) + a ribonucleoside 5'-triphosphate = RNA(n+1) + diphosphate. In terms of biological role, promotes RNA polymerase assembly. Latches the N- and C-terminal regions of the beta' subunit thereby facilitating its interaction with the beta and alpha subunits. This chain is DNA-directed RNA polymerase subunit omega, found in Saccharophagus degradans (strain 2-40 / ATCC 43961 / DSM 17024).